The following is a 72-amino-acid chain: Translation initiation factor IF-1 (72 aa).

The region spanning 1–72 (MSKEDMIEFS…TKGRITFRFK (72 aa)) is the S1-like domain.

Belongs to the IF-1 family. In terms of assembly, component of the 30S ribosomal translation pre-initiation complex which assembles on the 30S ribosome in the order IF-2 and IF-3, IF-1 and N-formylmethionyl-tRNA(fMet); mRNA recruitment can occur at any time during PIC assembly.

The protein localises to the cytoplasm. Functionally, one of the essential components for the initiation of protein synthesis. Stabilizes the binding of IF-2 and IF-3 on the 30S subunit to which N-formylmethionyl-tRNA(fMet) subsequently binds. Helps modulate mRNA selection, yielding the 30S pre-initiation complex (PIC). Upon addition of the 50S ribosomal subunit IF-1, IF-2 and IF-3 are released leaving the mature 70S translation initiation complex. The sequence is that of Translation initiation factor IF-1 from Acidiphilium cryptum (strain JF-5).